Reading from the N-terminus, the 258-residue chain is Ribosomal RNA small subunit methyltransferase J (258 aa).

Residues 107–108 (RD), 123–124 (ER), 159–160 (SS), and D177 each bind S-adenosyl-L-methionine.

It belongs to the methyltransferase superfamily. RsmJ family.

Its subcellular location is the cytoplasm. The catalysed reaction is guanosine(1516) in 16S rRNA + S-adenosyl-L-methionine = N(2)-methylguanosine(1516) in 16S rRNA + S-adenosyl-L-homocysteine + H(+). Specifically methylates the guanosine in position 1516 of 16S rRNA. This is Ribosomal RNA small subunit methyltransferase J from Shewanella sediminis (strain HAW-EB3).